We begin with the raw amino-acid sequence, 74 residues long: Ubiquitin-like protein FUBI (74 aa).

Belongs to the ubiquitin family.

Confers arsenite resistance. The chain is Ubiquitin-like protein FUBI (FAU) from Cricetulus griseus (Chinese hamster).